A 321-amino-acid polypeptide reads, in one-letter code: Ribosomal RNA small subunit methyltransferase H (321 aa).

Residues 34-36 (GGH), Asp54, Phe80, Asp102, and Gln109 each bind S-adenosyl-L-methionine.

The protein belongs to the methyltransferase superfamily. RsmH family.

Its subcellular location is the cytoplasm. It catalyses the reaction cytidine(1402) in 16S rRNA + S-adenosyl-L-methionine = N(4)-methylcytidine(1402) in 16S rRNA + S-adenosyl-L-homocysteine + H(+). In terms of biological role, specifically methylates the N4 position of cytidine in position 1402 (C1402) of 16S rRNA. The protein is Ribosomal RNA small subunit methyltransferase H of Blochmanniella floridana.